The sequence spans 308 residues: Methionyl-tRNA formyltransferase (308 aa).

109–112 (SLLP) lines the (6S)-5,6,7,8-tetrahydrofolate pocket.

Belongs to the Fmt family.

It catalyses the reaction L-methionyl-tRNA(fMet) + (6R)-10-formyltetrahydrofolate = N-formyl-L-methionyl-tRNA(fMet) + (6S)-5,6,7,8-tetrahydrofolate + H(+). In terms of biological role, attaches a formyl group to the free amino group of methionyl-tRNA(fMet). The formyl group appears to play a dual role in the initiator identity of N-formylmethionyl-tRNA by promoting its recognition by IF2 and preventing the misappropriation of this tRNA by the elongation apparatus. In Methylobacillus flagellatus (strain ATCC 51484 / DSM 6875 / VKM B-1610 / KT), this protein is Methionyl-tRNA formyltransferase.